The sequence spans 602 residues: Aspartate--tRNA(Asp/Asn) ligase (602 aa).

Glu-170 lines the L-aspartate pocket. Residues 194-197 (QLFK) form an aspartate region. Arg-216 serves as a coordination point for L-aspartate. Residues 216-218 (RDE) and Gln-225 each bind ATP. An L-aspartate-binding site is contributed by His-448. Residue Glu-482 participates in ATP binding. Arg-489 contributes to the L-aspartate binding site. Residue 534–537 (GWDR) coordinates ATP. Positions 559–602 (GGVDPLTDAPAPISAQQRKESGIDAKPEKKSEDKKSEGDTAEAK) are disordered. Positions 575-602 (QRKESGIDAKPEKKSEDKKSEGDTAEAK) are enriched in basic and acidic residues.

The protein belongs to the class-II aminoacyl-tRNA synthetase family. Type 1 subfamily. In terms of assembly, homodimer.

Its subcellular location is the cytoplasm. The catalysed reaction is tRNA(Asx) + L-aspartate + ATP = L-aspartyl-tRNA(Asx) + AMP + diphosphate. Its function is as follows. Aspartyl-tRNA synthetase with relaxed tRNA specificity since it is able to aspartylate not only its cognate tRNA(Asp) but also tRNA(Asn). Reaction proceeds in two steps: L-aspartate is first activated by ATP to form Asp-AMP and then transferred to the acceptor end of tRNA(Asp/Asn). This chain is Aspartate--tRNA(Asp/Asn) ligase, found in Rhodococcus erythropolis (strain PR4 / NBRC 100887).